The sequence spans 71 residues: DNA gyrase inhibitor YacG (71 aa).

The Zn(2+) site is built by cysteine 8, cysteine 11, cysteine 27, and cysteine 31. The interval 48-71 (VVEDDDLPPDAPGGESGGASGRLN) is disordered. Positions 61 to 71 (GESGGASGRLN) are enriched in gly residues.

This sequence belongs to the DNA gyrase inhibitor YacG family. In terms of assembly, interacts with GyrB. It depends on Zn(2+) as a cofactor.

In terms of biological role, inhibits all the catalytic activities of DNA gyrase by preventing its interaction with DNA. Acts by binding directly to the C-terminal domain of GyrB, which probably disrupts DNA binding by the gyrase. This is DNA gyrase inhibitor YacG from Ralstonia nicotianae (strain ATCC BAA-1114 / GMI1000) (Ralstonia solanacearum).